The following is a 262-amino-acid chain: MQEAQYLTSDLSVKAKASNLNLWYGQKQALHDINIDIYERKITALIGPSGCGKSTFLRCLNRMNDLVGGCRVEGLVEVDGFNIYDPAIDVVAVRKRVGMVFQQPNPFPKSIYENIAYAPLMHDLVKKGSDCDQLVEESLKGAGLWEEVKDKLKSPGTALSGGQQQRLCIARAIAVKPEIILMDEPTSALDPISTQTIENLMVTLKEQFTIVVVTHNMQQAARVANYTAFFHLGELIEYDETEKIFVSPQKSKTEQYITGKFG.

The ABC transporter domain occupies 15-257 (AKASNLNLWY…PQKSKTEQYI (243 aa)). 47–54 (GPSGCGKS) serves as a coordination point for ATP.

It belongs to the ABC transporter superfamily. Phosphate importer (TC 3.A.1.7) family. In terms of assembly, the complex is composed of two ATP-binding proteins (PstB), two transmembrane proteins (PstC and PstA) and a solute-binding protein (PstS).

Its subcellular location is the cell inner membrane. It catalyses the reaction phosphate(out) + ATP + H2O = ADP + 2 phosphate(in) + H(+). In terms of biological role, part of the ABC transporter complex PstSACB involved in phosphate import. Responsible for energy coupling to the transport system. In Wolinella succinogenes (strain ATCC 29543 / DSM 1740 / CCUG 13145 / JCM 31913 / LMG 7466 / NCTC 11488 / FDC 602W) (Vibrio succinogenes), this protein is Phosphate import ATP-binding protein PstB.